The following is an 88-amino-acid chain: Large ribosomal subunit protein bL27 (88 aa).

The tract at residues 1–21 is disordered; sequence MAHKKGQGSTQNNRDSAGRRL.

It belongs to the bacterial ribosomal protein bL27 family.

This is Large ribosomal subunit protein bL27 from Helicobacter pylori (strain P12).